The chain runs to 1125 residues: RGS domain-containing serine/threonine-protein kinase A (1125 aa).

Disordered regions lie at residues 1–77 (MKTS…GGNK), 96–191 (RRNS…IVDD), 276–416 (GISP…NNTN), and 455–480 (YVGGNKGSEDRRKKIEQKKKQVPAPE). Composition is skewed to low complexity over residues 7–30 (SSNSNSNNNNNNNNNNNNNNNNNN) and 37–66 (SSKSLSPPTSPKQMSGNSIISNSTGNLSSG). The segment covering 121 to 136 (LDSKPPKPFDEKDDPI) has biased composition (basic and acidic residues). Low complexity-rich tracts occupy residues 159–191 (QPQQTQQQSSGENLNNSSDRNNNSNENNQIVDD) and 281–342 (NNNN…LNNS). The segment covering 343–361 (PRYLNSSSSPRSMQHLSSK) has biased composition (polar residues). Residues 362-416 (ITTTTTTTTTTTTTTSDDNNGNTNNNISNNNNIINNSNNNSNSNNNNNNNINNTN) show a composition bias toward low complexity. The RGS domain maps to 487-603 (KFIETITDPT…ISSPFNPEWK (117 aa)). A compositionally biased stretch (low complexity) spans 617–685 (TTTQPINNFN…NNSNGSNTSS (69 aa)). Disordered stretches follow at residues 617-710 (TTTQ…KERS) and 723-762 (NLSNHSNSSSNSNGKDKDKDKDKNENTTDNSNNNNNSNNN). Residues 690 to 710 (ERLDNIKGNRERVDSNGKERS) are compositionally biased toward basic and acidic residues. The span at 723 to 735 (NLSNHSNSSSNSN) shows a compositional bias: low complexity. A compositionally biased stretch (basic and acidic residues) spans 736–748 (GKDKDKDKDKNEN). Positions 749–762 (TTDNSNNNNNSNNN) are enriched in low complexity. Positions 842–1097 (VSIHKWIASG…YLESIIYPSV (256 aa)) constitute a Protein kinase domain. ATP contacts are provided by residues 848-856 (IASGSSGRV) and K869. The active-site Proton acceptor is the D963.

It belongs to the protein kinase superfamily. TKL Ser/Thr protein kinase family. Autophosphorylated.

It is found in the cytoplasm. It localises to the cell membrane. It catalyses the reaction L-seryl-[protein] + ATP = O-phospho-L-seryl-[protein] + ADP + H(+). It carries out the reaction L-threonyl-[protein] + ATP = O-phospho-L-threonyl-[protein] + ADP + H(+). Up-regulated by cAMP. Serine/threonine kinase involved in negative regulation of chemotaxis. In Dictyostelium discoideum (Social amoeba), this protein is RGS domain-containing serine/threonine-protein kinase A (rckA).